The chain runs to 301 residues: NADH-cytochrome b5 reductase 3 (301 aa).

A lipid anchor (N-myristoyl glycine) is attached at G2. Residues 40-152 form the FAD-binding FR-type domain; sequence DIKYPLRLID…RGPNGLLVYQ (113 aa). Position 42 is an N6-acetyllysine (K42). Y43 is modified (phosphotyrosine). K50 carries the post-translational modification N6-acetyllysine. FAD-binding residues include R92, P93, Y94, V109, K111, and F114. At K120 the chain carries N6-acetyllysine. Positions 126, 127, 128, and 185 each coordinate FAD.

Belongs to the flavoprotein pyridine nucleotide cytochrome reductase family. As to quaternary structure, component of a complex composed of cytochrome b5, NADH-cytochrome b5 reductase (CYB5R3) and MTARC2. Interacts with MTLN; the interaction is required to maintain cellular lipid composition and leads to stimulation of mitochondrial respiratory complex I activity. It depends on FAD as a cofactor. Post-translationally, myristoylated. In terms of tissue distribution, ubiquitously expressed. Expressed only in erythroid tissues, reticulocytes and liver.

It is found in the endoplasmic reticulum membrane. It localises to the mitochondrion outer membrane. The protein resides in the cytoplasm. It carries out the reaction 2 Fe(III)-[cytochrome b5] + NADH = 2 Fe(II)-[cytochrome b5] + NAD(+) + H(+). Its function is as follows. Catalyzes the reduction of two molecules of cytochrome b5 using NADH as the electron donor. The polypeptide is NADH-cytochrome b5 reductase 3 (Rattus norvegicus (Rat)).